A 120-amino-acid chain; its full sequence is Testis-expressed protein 48 (120 aa).

Over residues Lys-29–Leu-45 the composition is skewed to polar residues. The interval Lys-29–Glu-86 is disordered. The segment covering Thr-74–Ser-83 has biased composition (low complexity).

In Homo sapiens (Human), this protein is Testis-expressed protein 48.